Here is a 138-residue protein sequence, read N- to C-terminus: High mobility group B protein 4 (138 aa).

2 disordered regions span residues 1 to 41 (MKGG…PPSA) and 105 to 138 (LKLASGTNREEDDSDKSKSEVDEAVSEEEAEDDD). The segment covering 18-29 (KTRGRKAGKKTK) has biased composition (basic residues). A DNA-binding region (HMG box) is located at residues 35-104 (PKRPPSAFFV…EYIKNVQQYN (70 aa)). Residues Ser123 and Ser130 each carry the phosphoserine modification. Over residues 126–138 (DEAVSEEEAEDDD) the composition is skewed to acidic residues.

This sequence belongs to the HMGB family. In terms of tissue distribution, mostly expressed roots and flowers, and, to a lower extent, in stems and leaves.

It localises to the nucleus. It is found in the cytoplasm. Its subcellular location is the cytosol. Binds preferentially double-stranded DNA. This Arabidopsis thaliana (Mouse-ear cress) protein is High mobility group B protein 4 (HMGB4).